The chain runs to 249 residues: Salivary antigen-5 (249 aa).

An N-terminal signal peptide occupies residues 1–26 (MAKTQCPLVFSLLALALIGTLQSSAA). The region spanning 50–193 (SIHNYYRNLT…WYAGYLVCNY (144 aa)) is the SCP domain. Asn-57, Asn-127, and Asn-168 each carry an N-linked (GlcNAc...) asparagine glycan.

This sequence belongs to the CRISP family. Venom allergen 5-like subfamily. In terms of assembly, monomeric in solution. It depends on Cu(2+) as a cofactor. As to expression, saliva (at protein level). Salivary gland (at protein level).

The protein resides in the secreted. In terms of biological role, antioxidant protein that scavenges superoxide radicals. Removes superoxide radicals produced by PMA-stimulated host neutrophils. Inhibits host platelet aggregation induced by low doses of collagen by interfering with the pro-aggregatory properties of reactive oxygen species on platelets. Binds to heparin and sulfated glycosaminoglycans. This Dipetalogaster maximus (Blood-sucking bug) protein is Salivary antigen-5.